The chain runs to 110 residues: Putative pterin-4-alpha-carbinolamine dehydratase (110 aa).

Belongs to the pterin-4-alpha-carbinolamine dehydratase family.

It catalyses the reaction (4aS,6R)-4a-hydroxy-L-erythro-5,6,7,8-tetrahydrobiopterin = (6R)-L-erythro-6,7-dihydrobiopterin + H2O. The sequence is that of Putative pterin-4-alpha-carbinolamine dehydratase from Vibrio vulnificus (strain CMCP6).